A 432-amino-acid chain; its full sequence is Elongation factor 1-gamma (432 aa).

One can recognise a GST N-terminal domain in the interval leucine 1–serine 82. The 129-residue stretch at threonine 83–phenylalanine 211 folds into the GST C-terminal domain. N6-acetyllysine is present on residues lysine 142 and lysine 207. Over residues phenylalanine 216–alanine 249 the composition is skewed to basic and acidic residues. A disordered region spans residues phenylalanine 216–leucine 258. Residue lysine 248 forms a Glycyl lysine isopeptide (Lys-Gly) (interchain with G-Cter in SUMO1) linkage. The 162-residue stretch at alanine 271 to lysine 432 folds into the EF-1-gamma C-terminal domain. Residue lysine 280 forms a Glycyl lysine isopeptide (Lys-Gly) (interchain with G-Cter in SUMO2) linkage. The residue at position 396 (lysine 396) is an N6-acetyllysine. At lysine 429 the chain carries N6-acetyllysine; alternate. An N6-malonyllysine; alternate modification is found at lysine 429.

EF-1 is composed of four subunits: alpha, beta, delta, and gamma.

Functionally, probably plays a role in anchoring the complex to other cellular components. This Sus scrofa (Pig) protein is Elongation factor 1-gamma (EEF1G).